A 297-amino-acid chain; its full sequence is Undecaprenyl-diphosphatase (297 aa).

7 consecutive transmembrane segments (helical) span residues 39-59 (PGAA…LIYF), 85-105 (ARLA…GLTL), 113-133 (FRSL…LLVV), 151-171 (GILI…RSGT), 190-210 (SFLL…KHLL), 220-240 (ALWV…AWLL), and 249-269 (LVFV…LQTG).

Belongs to the UppP family.

Its subcellular location is the cell inner membrane. It carries out the reaction di-trans,octa-cis-undecaprenyl diphosphate + H2O = di-trans,octa-cis-undecaprenyl phosphate + phosphate + H(+). In terms of biological role, catalyzes the dephosphorylation of undecaprenyl diphosphate (UPP). Confers resistance to bacitracin. The polypeptide is Undecaprenyl-diphosphatase (Myxococcus xanthus (strain DK1622)).